The chain runs to 801 residues: Endonuclease MutS2 (801 aa).

336–343 lines the ATP pocket; it reads GPNTGGKT. The interval 696 to 721 is disordered; the sequence is AQQSKAKQKQQKIVKTKTASGSARAT. The span at 701 to 710 shows a compositional bias: basic residues; that stretch reads AKQKQQKIVK. The region spanning 726-801 is the Smr domain; sequence LDLRGVRYEA…GDGATIAELS (76 aa).

Belongs to the DNA mismatch repair MutS family. MutS2 subfamily. Homodimer. Binds to stalled ribosomes, contacting rRNA.

In terms of biological role, endonuclease that is involved in the suppression of homologous recombination and thus may have a key role in the control of bacterial genetic diversity. Functionally, acts as a ribosome collision sensor, splitting the ribosome into its 2 subunits. Detects stalled/collided 70S ribosomes which it binds and splits by an ATP-hydrolysis driven conformational change. Acts upstream of the ribosome quality control system (RQC), a ribosome-associated complex that mediates the extraction of incompletely synthesized nascent chains from stalled ribosomes and their subsequent degradation. Probably generates substrates for RQC. The polypeptide is Endonuclease MutS2 (Leuconostoc citreum (strain KM20)).